The primary structure comprises 780 residues: Striatin (780 aa).

Residues 53-120 adopt a coiled-coil conformation; it reads LHFLQHEWAR…QERAKYHKLK (68 aa). The interval 55–63 is caveolin-binding; that stretch reads FLQHEWARF. The tract at residues 124–145 is disordered; it reads ELNQGDMKPPSYDSDEGNETEV. Ser137 is subject to Phosphoserine. Residues 149–166 are calmodulin-binding; it reads QNSQFMWKQGRQLLRQYL. The residue at position 225 (Thr225) is a Phosphothreonine. Phosphoserine occurs at positions 227, 229, 245, and 259. 3 disordered regions span residues 290–321, 334–353, and 363–388; these read FLVASEEGDNESRSAGDGTDWEKEDQCLTPER, EQYKKERKGKKGVKRPNRSK, and DVDELPSLQPSVGSPSRPSSSRLPEQ. A compositionally biased stretch (basic and acidic residues) spans 299-315; sequence NESRSAGDGTDWEKEDQ. Over residues 338–351 the composition is skewed to basic residues; it reads KERKGKKGVKRPNR. WD repeat units lie at residues 461 to 500, 514 to 553, 567 to 606, 662 to 701, 704 to 743, and 750 to 780; these read SHFDGIRALAFHPIEPVLITASEDHTLKMWNLQKTAPAKK, AHKGPVLCVVMSSNGEQCYSGGTDGLIQSWSTTNPNVDPY, GHTDAVWGLAYSAAHQRLLSCSADGTLRLWTTTEVAPALT, SSSCQINRVISHPTLPISITAHEDRHIKFYDNNTGKLIHS, AHLEAVTSLAVDPNGLYLMSGSHDCSIRLWNLESKTCIQE, and KFEESIHDVAFHPSKCYIASAGADALAKVFV.

Belongs to the WD repeat striatin family. In terms of assembly, part of the core of STRIPAK complexes composed of PP2A catalytic and scaffolding subunits, the striatins (PP2A regulatory subunits), the striatin-associated proteins MOB4, STRIP1 and STRIP2, PDCD10 and members of the STE20 kinases, such as STK24 and STK26. Interacts with CTTNBP2; this interaction may regulate dendritic spine distribution of STRN. Activation of glutamate receptors weakens the interaction with CTTNBP2. As to expression, mainly expressed in the central nervous system. Mostly confined in dendrites, not in axons, and is most abundant in dendritic spines.

It is found in the cytoplasm. The protein localises to the membrane. Its subcellular location is the cell projection. It localises to the dendritic spine. In terms of biological role, calmodulin-binding scaffolding protein which is the center of the striatin-interacting phosphatase and kinase (STRIPAK) complexes. STRIPAK complexes have critical roles in protein (de)phosphorylation and are regulators of multiple signaling pathways including Hippo, MAPK, nuclear receptor and cytoskeleton remodeling. Different types of STRIPAK complexes are involved in a variety of biological processes such as cell growth, differentiation, apoptosis, metabolism and immune regulation. In Rattus norvegicus (Rat), this protein is Striatin (Strn).